Reading from the N-terminus, the 239-residue chain is Segregation and condensation protein A (239 aa).

It belongs to the ScpA family. As to quaternary structure, component of a cohesin-like complex composed of ScpA, ScpB and the Smc homodimer, in which ScpA and ScpB bind to the head domain of Smc. The presence of the three proteins is required for the association of the complex with DNA.

The protein localises to the cytoplasm. Functionally, participates in chromosomal partition during cell division. May act via the formation of a condensin-like complex containing Smc and ScpB that pull DNA away from mid-cell into both cell halves. This is Segregation and condensation protein A from Streptococcus suis (strain 98HAH33).